The primary structure comprises 261 residues: Uridylate kinase (261 aa).

Positions 1–23 (MTEPDVAGAPASKPEPASTGAAS) are disordered. Position 36 to 39 (36 to 39 (KLGG)) interacts with ATP. Position 77 (Gly-77) interacts with UMP. ATP-binding residues include Gly-78 and Arg-82. UMP is bound by residues Asp-97 and 158 to 165 (MGLPYFST). 2 residues coordinate ATP: Phe-191 and Asp-194.

It belongs to the UMP kinase family. In terms of assembly, homohexamer.

It localises to the cytoplasm. The catalysed reaction is UMP + ATP = UDP + ADP. It functions in the pathway pyrimidine metabolism; CTP biosynthesis via de novo pathway; UDP from UMP (UMPK route): step 1/1. With respect to regulation, inhibited by UTP. Catalyzes the reversible phosphorylation of UMP to UDP. This Mycobacterium tuberculosis (strain ATCC 25177 / H37Ra) protein is Uridylate kinase.